The primary structure comprises 184 residues: Copper transporter 6 (184 aa).

Residues 1 to 25 (MRGMGDDGMGPMAMAPPRSGHATAA) are compositionally biased toward low complexity. The interval 1–27 (MRGMGDDGMGPMAMAPPRSGHATAAAP) is disordered. Helical transmembrane passes span 64–84 (YALCLLFVLALAALTEGLSVL) and 124–144 (MAYLVMLAVMSFNVGVLLAAV).

It belongs to the copper transporter (Ctr) (TC 1.A.56) family. SLC31A subfamily.

The protein resides in the membrane. Functionally, involved in the transport of copper. This Oryza sativa subsp. japonica (Rice) protein is Copper transporter 6 (COPT6).